A 381-amino-acid chain; its full sequence is Probable peptidoglycan glycosyltransferase FtsW (381 aa).

9 helical membrane passes run 16–36 (LVLLLMVVALTSFGIVMVYSA), 56–76 (LIFALVGCVGALVTMRIDYQL), 80–100 (WAVPLLFVSLILLVLVLIPGI), 145–165 (LLSAGFLPYMVVLMILLGLLL), 168–188 (PDMGAALTLAAVTIIMLFAAG), 191–211 (LIFILGSGMVAMPFVVYLVVH), 274–294 (VIGEELGFIGVIVIIGMFFIL), 312–332 (FLALGIAVLFAIEAVVNMAVV), and 343–363 (LPFLSYGGSSLLISLFAVGIL).

The protein belongs to the SEDS family. FtsW subfamily.

Its subcellular location is the cell inner membrane. The enzyme catalyses [GlcNAc-(1-&gt;4)-Mur2Ac(oyl-L-Ala-gamma-D-Glu-L-Lys-D-Ala-D-Ala)](n)-di-trans,octa-cis-undecaprenyl diphosphate + beta-D-GlcNAc-(1-&gt;4)-Mur2Ac(oyl-L-Ala-gamma-D-Glu-L-Lys-D-Ala-D-Ala)-di-trans,octa-cis-undecaprenyl diphosphate = [GlcNAc-(1-&gt;4)-Mur2Ac(oyl-L-Ala-gamma-D-Glu-L-Lys-D-Ala-D-Ala)](n+1)-di-trans,octa-cis-undecaprenyl diphosphate + di-trans,octa-cis-undecaprenyl diphosphate + H(+). It functions in the pathway cell wall biogenesis; peptidoglycan biosynthesis. Its function is as follows. Peptidoglycan polymerase that is essential for cell division. The polypeptide is Probable peptidoglycan glycosyltransferase FtsW (Trichlorobacter lovleyi (strain ATCC BAA-1151 / DSM 17278 / SZ) (Geobacter lovleyi)).